We begin with the raw amino-acid sequence, 87 residues long: Large ribosomal subunit protein bL27 (87 aa).

This sequence belongs to the bacterial ribosomal protein bL27 family.

In Wigglesworthia glossinidia brevipalpis, this protein is Large ribosomal subunit protein bL27.